The primary structure comprises 110 residues: DNA-directed RNA polymerase subunit omega (110 aa).

This sequence belongs to the RNA polymerase subunit omega family. The RNAP catalytic core consists of 2 alpha, 1 beta, 1 beta' and 1 omega subunit. When a sigma factor is associated with the core the holoenzyme is formed, which can initiate transcription.

It carries out the reaction RNA(n) + a ribonucleoside 5'-triphosphate = RNA(n+1) + diphosphate. Functionally, promotes RNA polymerase assembly. Latches the N- and C-terminal regions of the beta' subunit thereby facilitating its interaction with the beta and alpha subunits. This chain is DNA-directed RNA polymerase subunit omega, found in Mycobacterium leprae (strain Br4923).